The sequence spans 314 residues: Ribosomal RNA small subunit methyltransferase A (314 aa).

S-adenosyl-L-methionine contacts are provided by Asn29, Val31, Gly56, Glu77, Asp107, and Asn126. The interval 291–314 (PKADDAGDDADAQAKADGAQVSTL) is disordered. Residues 303–314 (QAKADGAQVSTL) show a composition bias toward low complexity.

This sequence belongs to the class I-like SAM-binding methyltransferase superfamily. rRNA adenine N(6)-methyltransferase family. RsmA subfamily.

It localises to the cytoplasm. The enzyme catalyses adenosine(1518)/adenosine(1519) in 16S rRNA + 4 S-adenosyl-L-methionine = N(6)-dimethyladenosine(1518)/N(6)-dimethyladenosine(1519) in 16S rRNA + 4 S-adenosyl-L-homocysteine + 4 H(+). Functionally, specifically dimethylates two adjacent adenosines (A1518 and A1519) in the loop of a conserved hairpin near the 3'-end of 16S rRNA in the 30S particle. May play a critical role in biogenesis of 30S subunits. In Mycolicibacterium gilvum (strain PYR-GCK) (Mycobacterium gilvum (strain PYR-GCK)), this protein is Ribosomal RNA small subunit methyltransferase A.